The following is a 304-amino-acid chain: 17-beta-hydroxysteroid dehydrogenase 13 (304 aa).

Positions 1–19 (MNLILEFLLLVGVIIYSYL) are cleaved as a signal peptide. A Phosphoserine modification is found at Ser33. 40–67 (LITGAGHGIGRLTAYEFAKQKSRLVLWD) provides a ligand contact to NAD(+). An N6-acetyllysine modification is found at Lys79. Substrate is bound at residue Ser172. The active-site Proton acceptor is the Tyr185. Lys189 provides a ligand contact to NAD(+). The segment at 276–304 (SSKHPHGGSQQPVTPIPGDLTPSSDFLKH) is disordered.

This sequence belongs to the short-chain dehydrogenases/reductases (SDR) family. Expressed predominantly in the liver (at protein level).

Its subcellular location is the lipid droplet. It is found in the endoplasmic reticulum. It catalyses the reaction 17beta-estradiol + NAD(+) = estrone + NADH + H(+). The enzyme catalyses all-trans-retinol + NAD(+) = all-trans-retinal + NADH + H(+). The catalysed reaction is all-trans-retinal + NAD(+) + H2O = all-trans-retinoate + NADH + 2 H(+). In terms of biological role, plays a pivotal role in hepatic lipid metabolism. In vitro, it catalyzes the oxidation of a variety of lipid substrates, including 17beta-estradiol, retinol, retinal, and leukotriene B4. The sequence is that of 17-beta-hydroxysteroid dehydrogenase 13 (Hsd17b13) from Mus musculus (Mouse).